The chain runs to 865 residues: Protein translocase subunit SecA (865 aa).

Residues Gln-85, 103–107, and Asp-505 contribute to the ATP site; that span reads GEGKT. Cys-847, Cys-849, Cys-858, and His-859 together coordinate Zn(2+).

This sequence belongs to the SecA family. Monomer and homodimer. Part of the essential Sec protein translocation apparatus which comprises SecA, SecYEG and auxiliary proteins SecDF. Other proteins may also be involved. Zn(2+) is required as a cofactor.

The protein resides in the cell membrane. It is found in the cytoplasm. The enzyme catalyses ATP + H2O + cellular proteinSide 1 = ADP + phosphate + cellular proteinSide 2.. Its function is as follows. Part of the Sec protein translocase complex. Interacts with the SecYEG preprotein conducting channel. Has a central role in coupling the hydrolysis of ATP to the transfer of proteins into and across the cell membrane, serving as an ATP-driven molecular motor driving the stepwise translocation of polypeptide chains across the membrane. The polypeptide is Protein translocase subunit SecA (Lactococcus lactis subsp. cremoris (strain SK11)).